The chain runs to 530 residues: Chaperone Ric-8A (530 aa).

S435 carries the phosphoserine; by CK2 modification. T440 is subject to Phosphothreonine; by CK2. T442 bears the Phosphothreonine mark. S501, S522, S523, and S527 each carry phosphoserine.

This sequence belongs to the synembryn family. As to quaternary structure, interacts with GDP-bound G alpha proteins GNAI1, GNAO1 and GNAQ, and with GNA13 with lower affinity. Does not interact with G-alpha proteins when they are in complex with subunits beta and gamma. Interacts (via C-terminus) with RGS14; the interaction stimulates the dissociation of the complex between RGS14 and the active GTP-bound form of GNAI1. Interacts with NCS1; interaction is favored in the absence of Ca(2+) and myristoylation of NCS1 is not required. Phosphorylated at Ser-435 and Thr-440 by CK2, stabilizing its interface with G alpha proteins.

Its subcellular location is the cytoplasm. It is found in the cell cortex. In terms of biological role, chaperone that specifically binds and folds nascent G alpha proteins prior to G protein heterotrimer formation, promoting their stability and activity: folds GNAI1, GNAO1, GNA13 and GNAQ. Does not fold G(s) G-alpha proteins GNAS nor GNAL. Also acts as a guanine nucleotide exchange factor (GEF) for G alpha proteins by stimulating exchange of bound GDP for free GTP. Involved in regulation of microtubule pulling forces during mitotic movement of chromosomes by stimulating G(i)-alpha protein (GNAI1), possibly leading to release G(i)-alpha-GTP and NuMA proteins from the NuMA-GPSM2-G(i)-alpha-GDP complex. Also acts as an activator for G(q)-alpha (GNAQ) protein by enhancing the G(q)-coupled receptor-mediated ERK activation. This is Chaperone Ric-8A from Rattus norvegicus (Rat).